A 258-amino-acid polypeptide reads, in one-letter code: Glucanase inhibitor protein 1 (258 aa).

Positions Met-1–Gly-19 are cleaved as a signal peptide. In terms of domain architecture, Peptidase S1 spans Ile-27–Lys-254. A disulfide bond links Cys-54 and Cys-70. N-linked (GlcNAc...) asparagine glycosylation is found at Asn-87, Asn-102, Asn-107, Asn-157, and Asn-185. Disulfide bonds link Cys-177-Cys-189 and Cys-199-Cys-230.

The protein belongs to the peptidase S1 family. Forms an apoplastic complex with host endoglucanases in tomato leaves during P.infestans infection.

The protein localises to the secreted. In terms of biological role, secreted effector that suppresses host plant glucan elicitor-mediated defense responses. Targets host endoglucanases and inhibits the endoglucanase-mediated release of elicitor-active glucan oligosaccharides from P.infestans cell walls. In Phytophthora infestans (Potato late blight agent), this protein is Glucanase inhibitor protein 1.